We begin with the raw amino-acid sequence, 422 residues long: ATP-dependent Clp protease ATP-binding subunit ClpX 1 (422 aa).

One can recognise a ClpX-type ZB domain in the interval 4–57; that stretch reads DRKNRESGKLLYCSFCGKSQHEVRKLIAGPAVFVCDECVELCNDIIREDLQGSE. Residues C16, C19, C38, and C41 each coordinate Zn(2+). 120 to 127 is a binding site for ATP; it reads PTGSGKTL.

The protein belongs to the ClpX chaperone family. As to quaternary structure, component of the ClpX-ClpP complex. Forms a hexameric ring that, in the presence of ATP, binds to fourteen ClpP subunits assembled into a disk-like structure with a central cavity, resembling the structure of eukaryotic proteasomes.

Its function is as follows. ATP-dependent specificity component of the Clp protease. It directs the protease to specific substrates. Can perform chaperone functions in the absence of ClpP. In Methylococcus capsulatus (strain ATCC 33009 / NCIMB 11132 / Bath), this protein is ATP-dependent Clp protease ATP-binding subunit ClpX 1.